A 217-amino-acid polypeptide reads, in one-letter code: Transcription antitermination protein NusB (217 aa).

This sequence belongs to the NusB family.

Functionally, involved in transcription antitermination. Required for transcription of ribosomal RNA (rRNA) genes. Binds specifically to the boxA antiterminator sequence of the ribosomal RNA (rrn) operons. This chain is Transcription antitermination protein NusB, found in Microcystis aeruginosa (strain NIES-843 / IAM M-2473).